Here is a 197-residue protein sequence, read N- to C-terminus: Holliday junction branch migration complex subunit RuvA (197 aa).

The interval 1 to 64 is domain I; that stretch reads MYEYIKGKYI…EDFIGVYGFL (64 aa). The segment at 65-144 is domain II; it reads TKDELSMFKL…DILEEDDEQI (80 aa). Residues 145 to 149 are flexible linker; it reads INKVA. The segment at 149-197 is domain III; the sequence is ADDKKVLEAVAALVTLGYSEKEANKVINSCDKNNSLEQIIKEALKYLMK.

This sequence belongs to the RuvA family. Homotetramer. Forms an RuvA(8)-RuvB(12)-Holliday junction (HJ) complex. HJ DNA is sandwiched between 2 RuvA tetramers; dsDNA enters through RuvA and exits via RuvB. An RuvB hexamer assembles on each DNA strand where it exits the tetramer. Each RuvB hexamer is contacted by two RuvA subunits (via domain III) on 2 adjacent RuvB subunits; this complex drives branch migration. In the full resolvosome a probable DNA-RuvA(4)-RuvB(12)-RuvC(2) complex forms which resolves the HJ.

The protein resides in the cytoplasm. Functionally, the RuvA-RuvB-RuvC complex processes Holliday junction (HJ) DNA during genetic recombination and DNA repair, while the RuvA-RuvB complex plays an important role in the rescue of blocked DNA replication forks via replication fork reversal (RFR). RuvA specifically binds to HJ cruciform DNA, conferring on it an open structure. The RuvB hexamer acts as an ATP-dependent pump, pulling dsDNA into and through the RuvAB complex. HJ branch migration allows RuvC to scan DNA until it finds its consensus sequence, where it cleaves and resolves the cruciform DNA. The sequence is that of Holliday junction branch migration complex subunit RuvA from Clostridium botulinum (strain ATCC 19397 / Type A).